A 185-amino-acid chain; its full sequence is Threonylcarbamoyl-AMP synthase (185 aa).

The region spanning 1–185 is the YrdC-like domain; it reads MDNLQQVVSA…AFSDTVLRQG (185 aa).

It belongs to the SUA5 family. TsaC subfamily.

The protein resides in the cytoplasm. The enzyme catalyses L-threonine + hydrogencarbonate + ATP = L-threonylcarbamoyladenylate + diphosphate + H2O. In terms of biological role, required for the formation of a threonylcarbamoyl group on adenosine at position 37 (t(6)A37) in tRNAs that read codons beginning with adenine. Catalyzes the conversion of L-threonine, HCO(3)(-)/CO(2) and ATP to give threonylcarbamoyl-AMP (TC-AMP) as the acyladenylate intermediate, with the release of diphosphate. The polypeptide is Threonylcarbamoyl-AMP synthase (Photobacterium profundum (strain SS9)).